Reading from the N-terminus, the 218-residue chain is UPF0126 membrane protein SCO4104 (218 aa).

The next 7 helical transmembrane spans lie at 8–28, 37–57, 64–84, 91–111, 118–138, 154–174, and 179–199; these read LLAL…LTAV, GVVV…DVLI, AFLD…AFAV, LEPA…VIGA, GLAV…GGTI, LYAI…ETGV, and AALG…HFGI.

The protein belongs to the UPF0126 family.

The protein localises to the cell membrane. This chain is UPF0126 membrane protein SCO4104, found in Streptomyces coelicolor (strain ATCC BAA-471 / A3(2) / M145).